The primary structure comprises 173 residues: Crossover junction endodeoxyribonuclease RuvC (173 aa).

Residues D8, E67, and D139 contribute to the active site. The Mg(2+) site is built by D8, E67, and D139.

This sequence belongs to the RuvC family. Homodimer which binds Holliday junction (HJ) DNA. The HJ becomes 2-fold symmetrical on binding to RuvC with unstacked arms; it has a different conformation from HJ DNA in complex with RuvA. In the full resolvosome a probable DNA-RuvA(4)-RuvB(12)-RuvC(2) complex forms which resolves the HJ. Mg(2+) is required as a cofactor.

It is found in the cytoplasm. The catalysed reaction is Endonucleolytic cleavage at a junction such as a reciprocal single-stranded crossover between two homologous DNA duplexes (Holliday junction).. Its function is as follows. The RuvA-RuvB-RuvC complex processes Holliday junction (HJ) DNA during genetic recombination and DNA repair. Endonuclease that resolves HJ intermediates. Cleaves cruciform DNA by making single-stranded nicks across the HJ at symmetrical positions within the homologous arms, yielding a 5'-phosphate and a 3'-hydroxyl group; requires a central core of homology in the junction. The consensus cleavage sequence is 5'-(A/T)TT(C/G)-3'. Cleavage occurs on the 3'-side of the TT dinucleotide at the point of strand exchange. HJ branch migration catalyzed by RuvA-RuvB allows RuvC to scan DNA until it finds its consensus sequence, where it cleaves and resolves the cruciform DNA. The protein is Crossover junction endodeoxyribonuclease RuvC of Aliivibrio salmonicida (strain LFI1238) (Vibrio salmonicida (strain LFI1238)).